Here is a 500-residue protein sequence, read N- to C-terminus: Probable malate:quinone oxidoreductase (500 aa).

It belongs to the MQO family. FAD is required as a cofactor.

The catalysed reaction is (S)-malate + a quinone = a quinol + oxaloacetate. Its pathway is carbohydrate metabolism; tricarboxylic acid cycle; oxaloacetate from (S)-malate (quinone route): step 1/1. In Bacillus cereus (strain ATCC 10987 / NRS 248), this protein is Probable malate:quinone oxidoreductase.